Consider the following 176-residue polypeptide: NAD(P)H-quinone oxidoreductase subunit J (176 aa).

2 stretches are compositionally biased toward polar residues: residues 1-12 (MEKDSQATSSDT) and 20-30 (ISQSLSKDGIP). A disordered region spans residues 1–30 (MEKDSQATSSDTSIEKEGVISQSLSKDGIP).

This sequence belongs to the complex I 30 kDa subunit family. NDH-1 can be composed of about 15 different subunits; different subcomplexes with different compositions have been identified which probably have different functions.

It is found in the cellular thylakoid membrane. It catalyses the reaction a plastoquinone + NADH + (n+1) H(+)(in) = a plastoquinol + NAD(+) + n H(+)(out). The catalysed reaction is a plastoquinone + NADPH + (n+1) H(+)(in) = a plastoquinol + NADP(+) + n H(+)(out). Functionally, NDH-1 shuttles electrons from an unknown electron donor, via FMN and iron-sulfur (Fe-S) centers, to quinones in the respiratory and/or the photosynthetic chain. The immediate electron acceptor for the enzyme in this species is believed to be plastoquinone. Couples the redox reaction to proton translocation, and thus conserves the redox energy in a proton gradient. Cyanobacterial NDH-1 also plays a role in inorganic carbon-concentration. This chain is NAD(P)H-quinone oxidoreductase subunit J, found in Prochlorococcus marinus (strain AS9601).